The following is a 118-amino-acid chain: Elongin-B (118 aa).

M1 carries the N-acetylmethionine modification. The Ubiquitin-like domain maps to 1-79 (MDVFLMIRRH…QAPATVGLAF (79 aa)). T84 carries the phosphothreonine modification. Positions 91–118 (EPFSSPPELPDVMKPQDSGGSANEQAVQ) are disordered. S108 and S111 each carry phosphoserine. Over residues 108 to 118 (SGGSANEQAVQ) the composition is skewed to polar residues.

Belongs to the Elongin B family. As to quaternary structure, heterotrimer of an A (ELOA, ELOA2 or ELOA3P), ELOB and ELOC subunit. The elongin BC complex interacts with EPOP; leading to recruit the elongin BC complex to Polycomb group (PcG) target genes, thereby restricting excessive activity of the PRC2/EED-EZH2 complex. Component of multiple cullin-RING E3 ubiquitin-protein ligase complexes composed of Elongin BC (ELOB and ELOC), a cullin (either CUL2 or CUL5), a catalytic subunit (either RBX1 or RNF7/RBX2), as well as a substrate adapter protein that can be either ASB2, ASB9, ASB11, KLHDC2, KLHDC3, KLHDC10, APPBP2, FEM1A, FEM1B, FEM1C, LRR1, PCMTD1, SOCS1, SOCS2, SOCS5, SPSB1, SPSB3, ELOA, VHL, WSB1 or RAB40C. As part of the Elongin BC E3 ubiquitin ligase complex; interacts with NRBP1. May also interact with DCUN1D1, DCUN1D2, DCUN1D3 and DCUN1D5. May form oligomers as a KLHDC2/KLHDC3-ELOB-ELOC complex; this interaction is autoinhibitory for the E3 ligase complex as the substrate-binding site of KLHDC2/KLHDC3 is blocked in the oligomer.

It localises to the nucleus. It participates in protein modification; protein ubiquitination. Functionally, SIII, also known as elongin, is a general transcription elongation factor that increases the RNA polymerase II transcription elongation past template-encoded arresting sites. Subunit A is transcriptionally active and its transcription activity is strongly enhanced by binding to the dimeric complex of the SIII regulatory subunits B and C (elongin BC complex). In embryonic stem cells, the elongin BC complex is recruited by EPOP to Polycomb group (PcG) target genes in order generate genomic region that display both active and repressive chromatin properties, an important feature of pluripotent stem cells. In terms of biological role, core component of multiple cullin-2 and cullin-5-RING E3 ubiquitin-protein ligase complexes (ECS complexes), which mediate the ubiquitination of target proteins. By binding to BC-box motifs it seems to link target recruitment subunits, like VHL and members of the SOCS box family, to Cullin/RBX1 modules that activate E2 ubiquitination enzymes. Component the von Hippel-Lindau ubiquitination complex CBC(VHL). A number of ECS complexes (containing either KLHDC2, KLHDC3, KLHDC10, APPBP2, FEM1A, FEM1B or FEM1C as substrate-recognition component) are part of the DesCEND (destruction via C-end degrons) pathway, which recognizes a C-degron located at the extreme C terminus of target proteins, leading to their ubiquitination and degradation. The ECS(ASB9) complex mediates ubiquitination and degradation of CKB. As part of a multisubunit ubiquitin ligase complex, polyubiquitinates monoubiquitinated POLR2A. ECS(LRR1) ubiquitinates MCM7 and promotes CMG replisome disassembly by VCP and chromatin extraction during S-phase. As part of the ECS(RAB40C) complex, mediates ANKRD28 ubiquitination and degradation, thereby inhibiting protein phosphatase 6 (PP6) complex activity and focal adhesion assembly during cell migration. In Mus musculus (Mouse), this protein is Elongin-B.